The following is a 219-amino-acid chain: Cytidylate kinase (219 aa).

21 to 29 (GPAASGKGT) is a binding site for ATP.

This sequence belongs to the cytidylate kinase family. Type 1 subfamily.

It localises to the cytoplasm. The enzyme catalyses CMP + ATP = CDP + ADP. It carries out the reaction dCMP + ATP = dCDP + ADP. The polypeptide is Cytidylate kinase (Rickettsia akari (strain Hartford)).